The following is a 203-amino-acid chain: uncharacterized protein (203 aa).

Positions 34, 97, and 172 each coordinate Fe cation.

The protein belongs to the hemerythrin family.

It localises to the mitochondrion. This is an uncharacterized protein from Schizosaccharomyces pombe (strain 972 / ATCC 24843) (Fission yeast).